The following is a 921-amino-acid chain: TRPM8 channel-associated factor 1 (921 aa).

Positions 542 to 841 constitute a Peptidase M60 domain; it reads YCWMSTGLYI…TYLQLQEAFG (300 aa).

Belongs to the TCAF family. As to quaternary structure, interacts with TRPM8 (via N-terminus and C-terminus domains); the interaction inhibits TRPM8 channel activity. Interacts with TRPV6.

It is found in the cell membrane. In terms of biological role, positively regulates the plasma membrane cation channel TRPM8 activity. Involved in the recruitment of TRPM8 to the cell surface. Promotes prostate cancer cell migration inhibition in a TRPM8-dependent manner. The chain is TRPM8 channel-associated factor 1 from Bos taurus (Bovine).